The sequence spans 308 residues: Aspartate carbamoyltransferase catalytic subunit (308 aa).

Carbamoyl phosphate is bound by residues Arg-55 and Thr-56. L-aspartate is bound at residue Lys-85. The carbamoyl phosphate site is built by Arg-106, His-135, and Gln-138. Arg-168 and Arg-229 together coordinate L-aspartate. Positions 267 and 268 each coordinate carbamoyl phosphate.

This sequence belongs to the aspartate/ornithine carbamoyltransferase superfamily. ATCase family. In terms of assembly, heterododecamer (2C3:3R2) of six catalytic PyrB chains organized as two trimers (C3), and six regulatory PyrI chains organized as three dimers (R2).

The enzyme catalyses carbamoyl phosphate + L-aspartate = N-carbamoyl-L-aspartate + phosphate + H(+). It participates in pyrimidine metabolism; UMP biosynthesis via de novo pathway; (S)-dihydroorotate from bicarbonate: step 2/3. Functionally, catalyzes the condensation of carbamoyl phosphate and aspartate to form carbamoyl aspartate and inorganic phosphate, the committed step in the de novo pyrimidine nucleotide biosynthesis pathway. The chain is Aspartate carbamoyltransferase catalytic subunit from Laribacter hongkongensis (strain HLHK9).